Reading from the N-terminus, the 163-residue chain is Nucleotide-binding protein Mvan_0997 (163 aa).

It belongs to the YajQ family.

Nucleotide-binding protein. This chain is Nucleotide-binding protein Mvan_0997, found in Mycolicibacterium vanbaalenii (strain DSM 7251 / JCM 13017 / BCRC 16820 / KCTC 9966 / NRRL B-24157 / PYR-1) (Mycobacterium vanbaalenii).